The sequence spans 419 residues: Protein translocase subunit SecY (419 aa).

10 consecutive transmembrane segments (helical) span residues 19-39 (IMIL…ITEV), 64-84 (VISI…AVQF), 113-133 (ILTV…LRSF), 143-163 (FVVA…SEVI), 167-189 (GIGN…FLIN), 202-222 (SNLY…FSTL), 255-275 (FGQA…FLTT), 299-319 (IFYF…YTLI), 359-379 (FVGS…AAAL), and 380-400 (GVHP…SIIN).

The protein belongs to the SecY/SEC61-alpha family. In terms of assembly, component of the plastid Sec protein translocase complex, which is composed of at least SecY and SecE.

Its subcellular location is the plastid. The protein localises to the chloroplast thylakoid membrane. Functionally, the central subunit of the protein translocation channel SecYE. Consists of two halves formed by TMs 1-5 and 6-10. These two domains form a lateral gate at the front which open onto the bilayer between TMs 2 and 7, and are clamped together by SecE at the back. The channel is closed by both a pore ring composed of hydrophobic SecY resides and a short helix (helix 2A) on the extracellular side of the membrane which forms a plug. The polypeptide is Protein translocase subunit SecY (Diacronema lutheri (Unicellular marine alga)).